A 172-amino-acid polypeptide reads, in one-letter code: uncharacterized protein (172 aa).

This sequence belongs to the archaeal NMN adenylyltransferase family.

This is an uncharacterized protein from Aeropyrum pernix (strain ATCC 700893 / DSM 11879 / JCM 9820 / NBRC 100138 / K1).